The primary structure comprises 284 residues: Efem/EfeO family lipoprotein (284 aa).

The N-terminal stretch at 1-17 (MKKLTTLLLASTLLIAA) is a signal peptide. C18 is lipidated: N-palmitoyl cysteine. C18 carries S-diacylglycerol cysteine lipidation.

Belongs to the EfeM/EfeO family.

It localises to the cell membrane. This Staphylococcus aureus (strain NCTC 8325 / PS 47) protein is Efem/EfeO family lipoprotein.